The chain runs to 677 residues: Vertnin (677 aa).

Disordered stretches follow at residues 356–376 (GSTG…SSPE) and 458–490 (HSGS…KLSP). Positions 458 to 472 (HSGSSEEGSDADKSQ) are enriched in basic and acidic residues.

This sequence belongs to the vertnin family.

Its subcellular location is the nucleus. Its function is as follows. Functions as a transcriptional repressor that modulates bmp2b expression during dorsoventral patterning. The protein is Vertnin (vrtn) of Danio rerio (Zebrafish).